Consider the following 386-residue polypeptide: Enoyl-[acyl-carrier-protein] reductase 2, mitochondrial (386 aa).

The N-terminal 22 residues, 1–22 (MYSVLKQSIRPRLLATHNQFRT), are a transit peptide targeting the mitochondrion. Catalysis depends on tyrosine 79, which acts as the Proton donor. NADP(+) contacts are provided by residues asparagine 172, 199 to 202 (TSAV), 222 to 224 (RDR), 296 to 299 (YGGM), 321 to 323 (FWV), and lysine 381.

The protein belongs to the zinc-containing alcohol dehydrogenase family. Quinone oxidoreductase subfamily. Homodimer and heterodimer with ETR1.

The protein resides in the mitochondrion. It carries out the reaction a 2,3-saturated acyl-[ACP] + NADP(+) = a (2E)-enoyl-[ACP] + NADPH + H(+). Required for respiration and the maintenance of the mitochondrial compartment. Oxidoreductase with a preference for short and medium chain substrates, including trans-2-hexenoyl-CoA (C6), trans-2-decenoyl-CoA (C10), and trans-2-hexadecenoyl-CoA (C16). May play a role in mitochondrial fatty acid synthesis. The chain is Enoyl-[acyl-carrier-protein] reductase 2, mitochondrial (ETR2) from Candida tropicalis (Yeast).